A 271-amino-acid polypeptide reads, in one-letter code: Pyrroline-5-carboxylate reductase (271 aa).

It belongs to the pyrroline-5-carboxylate reductase family.

It is found in the cytoplasm. The enzyme catalyses L-proline + NADP(+) = (S)-1-pyrroline-5-carboxylate + NADPH + 2 H(+). It carries out the reaction L-proline + NAD(+) = (S)-1-pyrroline-5-carboxylate + NADH + 2 H(+). It functions in the pathway amino-acid biosynthesis; L-proline biosynthesis; L-proline from L-glutamate 5-semialdehyde: step 1/1. Functionally, catalyzes the reduction of 1-pyrroline-5-carboxylate (PCA) to L-proline. The chain is Pyrroline-5-carboxylate reductase from Staphylococcus aureus (strain COL).